A 274-amino-acid polypeptide reads, in one-letter code: Undecaprenyl-diphosphatase (274 aa).

6 helical membrane passes run 44 to 64 (AKVFDIAIQTGAIFAVILVYW), 85 to 105 (LNVLIGFLPAVLLGLLLGKAI), 109 to 129 (LFTPVVVASTFILGGFVILWA), 185 to 205 (ATDYSFFLAIPTLIGAGVYSL), 215 to 235 (ADIPLFAVGLVFSFISAWLCV), and 250 to 270 (FAWYRIAFGLVVLVTAWSGLV).

The protein belongs to the UppP family.

The protein resides in the cell inner membrane. It catalyses the reaction di-trans,octa-cis-undecaprenyl diphosphate + H2O = di-trans,octa-cis-undecaprenyl phosphate + phosphate + H(+). Catalyzes the dephosphorylation of undecaprenyl diphosphate (UPP). Confers resistance to bacitracin. This chain is Undecaprenyl-diphosphatase, found in Acidovorax ebreus (strain TPSY) (Diaphorobacter sp. (strain TPSY)).